The following is a 548-amino-acid chain: Probable malate:quinone oxidoreductase (548 aa).

The disordered stretch occupies residues 521–548 (DKPQAADSTPKPQLKPQPVQKEVADIAL). A compositionally biased stretch (low complexity) spans 530–541 (PKPQLKPQPVQK).

The protein belongs to the MQO family. The cofactor is FAD.

It carries out the reaction (S)-malate + a quinone = a quinol + oxaloacetate. It participates in carbohydrate metabolism; tricarboxylic acid cycle; oxaloacetate from (S)-malate (quinone route): step 1/1. The sequence is that of Probable malate:quinone oxidoreductase from Shigella sonnei (strain Ss046).